The sequence spans 454 residues: DNA-binding protein (454 aa).

The disordered stretch occupies residues 1 to 41 (MSHKKVVAISESSSDEEVPVAPPTAPPKKRQRKAVEEPRGH). Position 129 is a phosphotyrosine; by host (Tyr-129). Zn(2+) contacts are provided by Cys-213 and His-215. Residues 226–260 (VEMDVNSENAQRALKENPEKTKIVSNRWGRNVVQF) form a flexible loop region. Zn(2+) contacts are provided by Cys-268, Cys-284, Cys-325, Cys-327, Cys-378, and Cys-394. The C-terminal arm, DBP binding stretch occupies residues 440–454 (TILPQGQHDDDLVLF).

It belongs to the adenoviridae E2A DNA-binding protein family. Homomultimerizes on viral ssDNA bound to pTP. Forms a initiation complex with viral polymerase, pTP and hosts NFIA and POU2F1/OCT1. Interacts with host SRCAP.

Its subcellular location is the host nucleus. Plays a role in the elongation phase of viral strand displacement replication by unwinding the template in an ATP-independent fashion, employing its capacity to form multimers. Also enhances the rate of initiation. Released from template upon second strand synthesis. Assembles in complex with viral pTP, viral pol, host NFIA and host POU2F1/OCT1 on viral origin of replication. Covers the whole ssDNA genome during synthesis. The complementary strand synthesis induces its relese from DNA template. May inhibit cellular transcription mediated by the interaction between host SRCAP and CBP. The chain is DNA-binding protein from Canine adenovirus serotype 1 (strain CLL) (CAdV-1).